The following is a 497-amino-acid chain: Guanosine-5'-triphosphate,3'-diphosphate pyrophosphatase (497 aa).

The protein belongs to the GppA/Ppx family. GppA subfamily.

It catalyses the reaction guanosine 3'-diphosphate 5'-triphosphate + H2O = guanosine 3',5'-bis(diphosphate) + phosphate + H(+). The protein operates within purine metabolism; ppGpp biosynthesis; ppGpp from GTP: step 2/2. In terms of biological role, catalyzes the conversion of pppGpp to ppGpp. Guanosine pentaphosphate (pppGpp) is a cytoplasmic signaling molecule which together with ppGpp controls the 'stringent response', an adaptive process that allows bacteria to respond to amino acid starvation, resulting in the coordinated regulation of numerous cellular activities. This Photobacterium profundum (strain SS9) protein is Guanosine-5'-triphosphate,3'-diphosphate pyrophosphatase.